Consider the following 327-residue polypeptide: MSVFSRLRNGIPPSRDDCQSPYERLSQRMLDISGDRGVLKDIIREGAGDPVTPDASVLVKYSGYLEHMDKPFDSNCFRKTPRLMKLGEDITLWGMELGLLSMRRGELARFLFKPTYAYGTLGCPPLIPPNATVLFEIELIDFLDSAESDKFCALSAEQQEQFPLQKVLKVAATEREFGNYLFRQNRFCDAKVRYKRALLLLHRRLAICEEQHLVEPAELLVLLNLSFVYLKLDRPAMALRYGEQALLIDKRNAKALFRCGQACLLLTEYEQARDFLVRAQKEQPCNHDINNELKKLSSHYRDYVDREREMCHRMFAPCGSGSSVGGN.

The interval 1–20 (MSVFSRLRNGIPPSRDDCQS) is disordered. The PPIase FKBP-type domain occupies 54–143 (DASVLVKYSG…LFEIELIDFL (90 aa)). TPR repeat units follow at residues 171–204 (AATE…LHRR), 219–252 (LLVL…DKRN), and 253–286 (AKAL…QPCN).

It belongs to the FKBP6 family. Interacts with HSP72/HSPA2 and CLTC. Interacts with GAPDH; leading to inhibit GAPDH catalytic activity. Interacts (via TPR repeats) with HSP90.

The protein resides in the cytoplasm. The protein localises to the cytosol. It is found in the nucleus. Its subcellular location is the chromosome. In terms of biological role, co-chaperone required during spermatogenesis to repress transposable elements and prevent their mobilization, which is essential for the germline integrity. Acts via the piRNA metabolic process, which mediates the repression of transposable elements during meiosis by forming complexes composed of piRNAs and Piwi proteins and govern the methylation and subsequent repression of transposons. Acts as a co-chaperone via its interaction with HSP90 and is required for the piRNA amplification process, the secondary piRNA biogenesis. May be required together with HSP90 in removal of 16 nucleotide ping-pong by-products from Piwi complexes, possibly facilitating turnover of Piwi complexes. The sequence is that of Inactive peptidyl-prolyl cis-trans isomerase FKBP6 (Fkbp6) from Rattus norvegicus (Rat).